A 221-amino-acid polypeptide reads, in one-letter code: Large ribosomal subunit protein uL4 (221 aa).

Residues 46 to 74 (AGTASTKTRSEVSGGGRKPWPQKHTGRAR) are disordered.

The protein belongs to the universal ribosomal protein uL4 family. As to quaternary structure, part of the 50S ribosomal subunit.

One of the primary rRNA binding proteins, this protein initially binds near the 5'-end of the 23S rRNA. It is important during the early stages of 50S assembly. It makes multiple contacts with different domains of the 23S rRNA in the assembled 50S subunit and ribosome. Its function is as follows. Forms part of the polypeptide exit tunnel. This chain is Large ribosomal subunit protein uL4, found in Petrotoga mobilis (strain DSM 10674 / SJ95).